Here is a 280-residue protein sequence, read N- to C-terminus: METIATRLAILPFPEIDPVIFTIGPLAVRWYGLAYVAGILLGWLYARRIIQNASLWRNGTAPFNLAQLDDFLLWAAGGIVLGGRIGYILFYDLGSILENPVRAIQIWNGGMSFHGGLLGTTLAIIIFARRNAIPLWSLFDVVAAVVPIGLFFGRIANFINGELWGRLSSMPWAVVFPTGGPFARHPSQLYEAALEGIVLLVVLAWFVYRRRALKMPGLVTGIFVCGYAASRIFVEFFREPDAQIGYLAGDWLTMGMVLSLPMALVGIWAIARARSAAAAA.

4 helical membrane passes run 30-50 (WYGL…RRII), 71-91 (FLLW…ILFY), 106-126 (IWNG…AIII), and 132-152 (AIPL…GLFF). Arginine 154 serves as a coordination point for a 1,2-diacyl-sn-glycero-3-phospho-(1'-sn-glycerol). Transmembrane regions (helical) follow at residues 188–208 (QLYE…WFVY), 217–237 (GLVT…VEFF), and 251–271 (WLTM…WAIA).

It belongs to the Lgt family.

The protein localises to the cell inner membrane. It catalyses the reaction L-cysteinyl-[prolipoprotein] + a 1,2-diacyl-sn-glycero-3-phospho-(1'-sn-glycerol) = an S-1,2-diacyl-sn-glyceryl-L-cysteinyl-[prolipoprotein] + sn-glycerol 1-phosphate + H(+). Its pathway is protein modification; lipoprotein biosynthesis (diacylglyceryl transfer). Catalyzes the transfer of the diacylglyceryl group from phosphatidylglycerol to the sulfhydryl group of the N-terminal cysteine of a prolipoprotein, the first step in the formation of mature lipoproteins. The protein is Phosphatidylglycerol--prolipoprotein diacylglyceryl transferase of Rhizobium meliloti (strain 1021) (Ensifer meliloti).